The primary structure comprises 834 residues: Periplasmic nitrate reductase (834 aa).

The segment at residues 1–31 is a signal peptide (tat-type signal); that stretch reads MTGELTRREMLKAHAAGIAAATAGIALPAAA. Residues 43 to 99 enclose the 4Fe-4S Mo/W bis-MGD-type domain; it reads ITWSKAPCRFCGTGCGVMVGVKEGQVVATHGDMQAEVNRGLNCIKGYFLSKIMYGTD. Residues C50, C53, C57, and C85 each contribute to the [4Fe-4S] cluster site. Mo-bis(molybdopterin guanine dinucleotide) is bound by residues K87, Q154, N179, C183, 216-223, 247-251, 266-268, M377, Q381, N487, 513-514, K536, D563, and 723-732; these read WGSNMAEM, STFTH, GTD, SD, and TGRVLEHWHS. W799 serves as a coordination point for substrate. Mo-bis(molybdopterin guanine dinucleotide) contacts are provided by N807 and K824.

This sequence belongs to the prokaryotic molybdopterin-containing oxidoreductase family. NasA/NapA/NarB subfamily. In terms of assembly, component of the periplasmic nitrate reductase NapAB complex composed of NapA and NapB. It depends on [4Fe-4S] cluster as a cofactor. Requires Mo-bis(molybdopterin guanine dinucleotide) as cofactor. Predicted to be exported by the Tat system. The position of the signal peptide cleavage has not been experimentally proven.

It localises to the periplasm. It catalyses the reaction 2 Fe(II)-[cytochrome] + nitrate + 2 H(+) = 2 Fe(III)-[cytochrome] + nitrite + H2O. Catalytic subunit of the periplasmic nitrate reductase complex NapAB. Receives electrons from NapB and catalyzes the reduction of nitrate to nitrite. This chain is Periplasmic nitrate reductase, found in Rhizobium meliloti (strain 1021) (Ensifer meliloti).